Consider the following 231-residue polypeptide: Platelet-activating factor acetylhydrolase IB subunit alpha1 (231 aa).

Serine 2 carries the N-acetylserine modification. The residue at position 2 (serine 2) is a Phosphoserine. Active-site residues include serine 47, aspartate 192, and histidine 195.

This sequence belongs to the 'GDSL' lipolytic enzyme family. Platelet-activating factor acetylhydrolase IB beta/gamma subunits subfamily. As to quaternary structure, forms a catalytic dimer which is either homodimer (alpha1/alpha1 homodimer) or heterodimer with PAFAH1B2 (alpha1/alpha2 heterodimer). Component of the cytosolic (PAF-AH (I)) heterotetrameric enzyme, which is composed of PAFAH1B1 (beta), PAFAH1B2 (alpha2) and PAFAH1B3 (alpha1) subunits. The catalytic activity of the enzyme resides in the alpha1 (PAFAH1B3) and alpha2 (PAFAH1B2) subunits, whereas the beta subunit (PAFAH1B1) has regulatory activity. Trimer formation is not essential for the catalytic activity. Interacts with VLDLR; this interaction may modulate the Reelin pathway.

It is found in the cytoplasm. It catalyses the reaction a 1-O-alkyl-2-acetyl-sn-glycero-3-phosphocholine + H2O = a 1-O-alkyl-sn-glycero-3-phosphocholine + acetate + H(+). It carries out the reaction 1-O-hexadecyl-2-acetyl-sn-glycero-3-phosphocholine + H2O = 1-O-hexadecyl-sn-glycero-3-phosphocholine + acetate + H(+). The enzyme catalyses 1-O-hexadecyl-2-acetyl-sn-glycero-3-phosphate + H2O = 1-O-hexadecyl-sn-glycero-3-phosphate + acetate + H(+). With respect to regulation, beta subunit (PAFAH1B1) inhibits the acetylhydrolase activity of the alpha1/alpha1 catalytic homodimer. Functionally, alpha1 catalytic subunit of the cytosolic type I platelet-activating factor (PAF) acetylhydrolase (PAF-AH (I)) heterotetrameric enzyme that catalyzes the hydrolyze of the acetyl group at the sn-2 position of PAF and its analogs and modulates the action of PAF. The activity and substrate specificity of PAF-AH (I) are affected by its subunit composition. Both alpha1/alpha1 homodimer (PAFAH1B3/PAFAH1B3 homodimer) and alpha1/alpha2 heterodimer(PAFAH1B3/PAFAH1B2 heterodimer) hydrolyze 1-O-alkyl-2-acetyl-sn-glycero-3-phosphoric acid (AAGPA) more efficiently than PAF, but they have little hydrolytic activity towards 1-O-alkyl-2-acetyl-sn-glycero-3-phosphorylethanolamine (AAGPE). Plays an important role during the development of brain. The chain is Platelet-activating factor acetylhydrolase IB subunit alpha1 from Pongo abelii (Sumatran orangutan).